The chain runs to 543 residues: GPI mannosyltransferase 4 (543 aa).

5 helical membrane-spanning segments follow: residues 5–25, 98–118, 176–196, 213–233, and 353–373; these read TYLL…YLHP, VMFL…VPFA, LAFI…FLAI, PVSL…AVLV, and LFLA…GIYH. A glycan (N-linked (GlcNAc...) asparagine) is linked at N428.

It belongs to the glycosyltransferase 22 family. PIGZ subfamily.

The protein localises to the endoplasmic reticulum membrane. The protein operates within glycolipid biosynthesis; glycosylphosphatidylinositol-anchor biosynthesis. In terms of biological role, alpha-1,2-mannosyltransferase involved in glycosylphosphatidylinositol-anchor biosynthesis. Transfers a fourth mannose to trimannosyl-GPIs during GPI precursor assembly. The presence of a fourth mannose in GPI is essential in fungi. The sequence is that of GPI mannosyltransferase 4 (smp3) from Aspergillus oryzae (strain ATCC 42149 / RIB 40) (Yellow koji mold).